Reading from the N-terminus, the 140-residue chain is Zinc finger SWIM domain-containing protein 7 (140 aa).

The SWIM-type zinc finger occupies 66–114 (YQVLGSSSKTYTCLASCHYCSCPAFAFSVLRKSDSILCKHLLAVYLSQV).

This sequence belongs to the SWS1 family. As to quaternary structure, interacts with RAD51D and XRCC3; involved in homologous recombination repair. Interacts with SWSAP1; they form a functional complex involved in homologous recombination repair and stabilize each other. As to expression, expressed in ovary and testis.

It is found in the nucleus. In terms of biological role, involved in early stages of the homologous recombination repair (HRR) pathway of double-stranded DNA breaks arising during DNA replication or induced by DNA-damaging agents. Required for meiotic progression, hence for fertility. The protein is Zinc finger SWIM domain-containing protein 7 (ZSWIM7) of Homo sapiens (Human).